We begin with the raw amino-acid sequence, 553 residues long: NAD(P)H-quinone oxidoreductase chain 4 2 (553 aa).

Helical transmembrane passes span 6–26 (FPWLSAIILLPLLASFLIPVI), 34–54 (VRWFALGVGLADFILMCYVFL), 87–107 (ISAPLVLLAGLVTTLSILAAW), 115–135 (LFYFLMLLLYAAQIGVFVAQD), 136–156 (LLLFFLMWEIELIPVYLLVSI), 169–189 (FLLYTAAASIFILVAGLAMAL), 210–230 (ALELVLYAGLLIAFGVKLAIF), 244–264 (SAPVSMILAGVLLKMGGYGLI), 276–296 (IYFAPILAILGVVNIIYGAFA), 312–332 (VSHMGFVLLGIASFTDVGISG), 333–353 (AMLQMLSHGLIAAVLFFLAGV), 376–396 (VFALFTAGAMASLALPGMSGF), 418–438 (VVTVFLASVGLILTPIYLLSM), and 487–507 (IFIAVSFLALIVAIGFYPQLA).

Belongs to the complex I subunit 4 family.

It localises to the cellular thylakoid membrane. It carries out the reaction a plastoquinone + NADH + (n+1) H(+)(in) = a plastoquinol + NAD(+) + n H(+)(out). The enzyme catalyses a plastoquinone + NADPH + (n+1) H(+)(in) = a plastoquinol + NADP(+) + n H(+)(out). NDH-1 shuttles electrons from NAD(P)H, via FMN and iron-sulfur (Fe-S) centers, to quinones in the respiratory chain. The immediate electron acceptor for the enzyme in this species is believed to be plastoquinone. Couples the redox reaction to proton translocation (for every two electrons transferred, four hydrogen ions are translocated across the cytoplasmic membrane), and thus conserves the redox energy in a proton gradient. This chain is NAD(P)H-quinone oxidoreductase chain 4 2, found in Microcystis aeruginosa (strain NIES-843 / IAM M-2473).